Consider the following 354-residue polypeptide: WASH complex subunit 3 (354 aa).

The interval 76-354 is disordered; that stretch reads SSANVPVHNT…DDDDDDDESW (279 aa). Over residues 107–143 the composition is skewed to pro residues; that stretch reads IPPPPPPPPPPMTGVPPPPPPPPPPPISKSNIPPPPA. Residues 150-159 show a composition bias toward acidic residues; sequence ESDDDDEDNN. Residues 213 to 244 show a composition bias toward pro residues; sequence PQPPQPQPQSPSPQPPPPPTTTSSIPVPPPPF. Acidic residues predominate over residues 251–260; it reads SDDDDDDDEG. Residues 277–290 are compositionally biased toward low complexity; that stretch reads NNNSNSNSYSNNNN. Acidic residues-rich tracts occupy residues 293 to 307 and 342 to 354; these read DDDD…DDDN and DADD…DESW.

The protein belongs to the CCDC53 family. As to quaternary structure, probable component of the WASH complex.

The chain is WASH complex subunit 3 from Dictyostelium discoideum (Social amoeba).